Consider the following 382-residue polypeptide: D-galactonate dehydratase (382 aa).

Asp-183 is a Mg(2+) binding site. His-185 (proton donor) is an active-site residue. The Mg(2+) site is built by Glu-209 and Glu-235. Catalysis depends on His-285, which acts as the Proton acceptor.

It belongs to the mandelate racemase/muconate lactonizing enzyme family. GalD subfamily. It depends on Mg(2+) as a cofactor.

It carries out the reaction D-galactonate = 2-dehydro-3-deoxy-D-galactonate + H2O. It functions in the pathway carbohydrate acid metabolism; D-galactonate degradation; D-glyceraldehyde 3-phosphate and pyruvate from D-galactonate: step 1/3. Its function is as follows. Catalyzes the dehydration of D-galactonate to 2-keto-3-deoxy-D-galactonate. The chain is D-galactonate dehydratase from Escherichia coli O45:K1 (strain S88 / ExPEC).